Consider the following 555-residue polypeptide: MAADMQRKRSSECPDGTLTPSDGHSVERAESPTPGLAQGMEPGAGQEGAMFVHARSYEDLTESEDGAASGDSPKEGARGPPPLPADMRQISQDFSELSTQLTGVARDLQEEMLPGSSEDWLDPPGAVGRPATEPPREGTAEGDEEDATEAWRLHQKHVFVLSEAGKPVYSRYGSEEALSSTMGVMVALVSFLEADKNAIRSIHADGYKVVFVRRSPLVLVAVARTRQSAQELAQELLYIYYQILSLLTGAQLSHIFQQKQNYDLRRLLSGSERITDNLLQLMARDPSFLMGAARCLPLAAAVRDTVSASLQQARARSLVFSILLARNQLVALVRRKDQFLHPIDLHLLFNLISSSSSFREGEAWTPVCLPKFNAAGFFHAHISYLEPDTDLCLLFVSTDREDFFAVSDCRRRFQERLRKRGAHLALREALRTPYYSVAQVGIPDLRHFLYKSKSSGLFTSPEIEAPYTSEEEQERLLGLYQYLHSRAHNASRPLKTIYYTGPNENLLAWVTGAFELYMCYSPLGTKASAVSAIHKLMRWIRKEEDRLFILTPLTY.

Residues 1-12 (MAADMQRKRSSE) show a composition bias toward basic and acidic residues. Residues 1–87 (MAADMQRKRS…RGPPPLPADM (87 aa)) form a disordered region. Serine 31 and serine 56 each carry phosphoserine. The residue at position 61 (threonine 61) is a Phosphothreonine. Residue serine 91 is modified to Phosphoserine. The disordered stretch occupies residues 114-147 (PGSSEDWLDPPGAVGRPATEPPREGTAEGDEEDA).

This sequence belongs to the MON1/SAND family. As to quaternary structure, interacts with CCZ1. Found in a complex with RMC1, CCZ1, MON1A and MON1B. The MON1A-CCZ1B complex interacts with RIMOC1. The MON1A-CCZ1B complex interacts with RAB7A and this interaction is enhanced in the presence of RIMOC1.

Its function is as follows. Plays an important role in membrane trafficking through the secretory apparatus. Not involved in endocytic trafficking to lysosomes. Acts in concert with CCZ1, as a guanine exchange factor (GEF) for RAB7, promotes the exchange of GDP to GTP, converting it from an inactive GDP-bound form into an active GTP-bound form. This is Vacuolar fusion protein MON1 homolog A (MON1A) from Macaca fascicularis (Crab-eating macaque).